Consider the following 333-residue polypeptide: DNA repair and recombination protein RadA (333 aa).

Residue Gly-127 to Thr-134 participates in ATP binding.

This sequence belongs to the eukaryotic RecA-like protein family.

In terms of biological role, involved in DNA repair and in homologous recombination. Binds and assemble on single-stranded DNA to form a nucleoprotein filament. Hydrolyzes ATP in a ssDNA-dependent manner and promotes DNA strand exchange between homologous DNA molecules. This is DNA repair and recombination protein RadA from Pyrobaculum arsenaticum (strain DSM 13514 / JCM 11321 / PZ6).